Here is a 158-residue protein sequence, read N- to C-terminus: Large ribosomal subunit protein bL21 (158 aa).

The tract at residues 127–158 (TQETKSAASVKKAAKKSAPQKQAAVASNSKED) is disordered. The span at 131-158 (KSAASVKKAAKKSAPQKQAAVASNSKED) shows a compositional bias: low complexity.

The protein belongs to the bacterial ribosomal protein bL21 family. In terms of assembly, part of the 50S ribosomal subunit. Contacts protein L20.

In terms of biological role, this protein binds to 23S rRNA in the presence of protein L20. The chain is Large ribosomal subunit protein bL21 from Bartonella henselae (strain ATCC 49882 / DSM 28221 / CCUG 30454 / Houston 1) (Rochalimaea henselae).